Here is a 96-residue protein sequence, read N- to C-terminus: Guanine nucleotide-binding protein alpha-9 subunit (96 aa).

In terms of domain architecture, G-alpha spans tyrosine 2–valine 96. The interval isoleucine 9–aspartate 16 is G1 motif. GTP-binding positions include asparagine 13–aspartate 16 and alanine 69. The interval threonine 67 to threonine 72 is G2 motif.

Belongs to the G-alpha family. G proteins are composed of 3 units; alpha, beta and gamma. The alpha chain contains the guanine nucleotide binding site. In terms of tissue distribution, expressed in ASJ neurons.

Its function is as follows. Guanine nucleotide-binding proteins (G proteins) are involved as modulators or transducers in various transmembrane signaling systems. Plays a role in innate immunity and maintaining survival in response to metabolites of E.coli. This might be by regulating the expression and signaling of genes such as lys-8, ins-7 and daf-28. Has a role in lifespan to promote longevity. The polypeptide is Guanine nucleotide-binding protein alpha-9 subunit (Caenorhabditis elegans).